Reading from the N-terminus, the 943-residue chain is Isoleucine--tRNA ligase (943 aa).

The 'HIGH' region motif lies at 59 to 69 (PYANGQIHLGH). E577 lines the L-isoleucyl-5'-AMP pocket. Positions 618–622 (KMSKS) match the 'KMSKS' region motif. ATP is bound at residue K621. The Zn(2+) site is built by C906, C909, C926, and C929.

This sequence belongs to the class-I aminoacyl-tRNA synthetase family. IleS type 1 subfamily. As to quaternary structure, monomer. It depends on Zn(2+) as a cofactor.

Its subcellular location is the cytoplasm. It carries out the reaction tRNA(Ile) + L-isoleucine + ATP = L-isoleucyl-tRNA(Ile) + AMP + diphosphate. Functionally, catalyzes the attachment of isoleucine to tRNA(Ile). As IleRS can inadvertently accommodate and process structurally similar amino acids such as valine, to avoid such errors it has two additional distinct tRNA(Ile)-dependent editing activities. One activity is designated as 'pretransfer' editing and involves the hydrolysis of activated Val-AMP. The other activity is designated 'posttransfer' editing and involves deacylation of mischarged Val-tRNA(Ile). The chain is Isoleucine--tRNA ligase from Xanthomonas campestris pv. campestris (strain B100).